The following is a 139-amino-acid chain: MEYQGQHGHATDKVEEYGQPVAGHGGFTGGPTGTHGAAGVGGAQLQATRDGHKTDGVLRRSGSSSSSSSEDDGVGGRRKKGMKEKIKEKLPGGAHKDAAGQQQQTAMAGEYAGTHGTEATGEKKGVMDKIKEKLPGGQH.

Positions 1–139 (MEYQGQHGHA…IKEKLPGGQH (139 aa)) are disordered. Over residues 23 to 42 (GHGGFTGGPTGTHGAAGVGG) the composition is skewed to gly residues. Over residues 49-58 (RDGHKTDGVL) the composition is skewed to basic and acidic residues. Positions 59–68 (RRSGSSSSSS) are enriched in low complexity. Residues 83 to 98 (KEKIKEKLPGGAHKDA) show a composition bias toward basic and acidic residues. A compositionally biased stretch (low complexity) spans 99–109 (AGQQQQTAMAG). Basic and acidic residues predominate over residues 120–139 (TGEKKGVMDKIKEKLPGGQH).

Belongs to the plant dehydrin family.

In Hordeum vulgare (Barley), this protein is Dehydrin DHN1 (DHN1).